A 429-amino-acid chain; its full sequence is MKQEIKPATGRLGVLVVGVGGAVATTMIVGTLASRKGLAKPIGSITQLATMRMENNEEKLIKDVVPLTDLNDIVFGGWDIFPDNAYEAAMYAEVLKEKDLNGVKDELEAIKPMPAAFDHNWAKRLNGTHIKKAATRWEMVEQLRQDIRDFKAANNCERVVVLWAASTEIYIPLSDEHMSLAALEKAMKDNNTEVISPSMCYAYAAIAEDAPFVMGAPNLCVDTPAMWEFSKQKNVPISGKDFKSGQTLMKTVLAPMFKTRMLGVNGWFSTNILGNRDGEVLDDPDNFKTKEVSKLSVIDTIFEPEKYPDLYGDVYHKVRINYYPPRKDNKEAWDNIDIFGWMGYPMEIKVNFLCRDSILAAPIALDLVLFSDLAMRAGMCGIQTWLSFFCKSPMHDFEHQPEHDLFTQWRMVKQTLRNMIGEKEPDYLA.

Residues 12–32 traverse the membrane as a helical segment; sequence LGVLVVGVGGAVATTMIVGTL. Ala22, Val23, Asp79, Ala116, Ala165, Thr167, Tyr201, Ser244, Arg276, Asp277, and Lys290 together coordinate NAD(+).

This sequence belongs to the myo-inositol 1-phosphate synthase family. As to quaternary structure, homotetramer. NAD(+) serves as cofactor.

Its subcellular location is the membrane. The catalysed reaction is D-glucose 6-phosphate = 1D-myo-inositol 3-phosphate. Its pathway is polyol metabolism; myo-inositol biosynthesis; myo-inositol from D-glucose 6-phosphate: step 1/2. Key enzyme in myo-inositol biosynthesis pathway that catalyzes the conversion of glucose 6-phosphate to 1D-myo-inositol 3-phosphate in a NAD-dependent manner. The polypeptide is Inositol-3-phosphate synthase 1 (Bacteroides thetaiotaomicron (strain ATCC 29148 / DSM 2079 / JCM 5827 / CCUG 10774 / NCTC 10582 / VPI-5482 / E50)).